We begin with the raw amino-acid sequence, 651 residues long: LysM domain receptor-like kinase 3 (651 aa).

The first 19 residues, 1 to 19 (MNLTFYIFFLSLLPSFSSS), serve as a signal peptide directing secretion. 8 N-linked (GlcNAc...) asparagine glycosylation sites follow: N2, N23, N42, N73, N86, N100, N114, and N177. The Extracellular segment spans residues 20–236 (KPMNCSDTTR…TAKSGSHVPY (217 aa)). Intrachain disulfides connect C24–C76, C31–C133, and C74–C131. The LysM domain maps to 142–186 (MSYVAMAGDSVQSLSSRFGVSMDRIEDVNGILNLDNITAGDLLYI). The segment at 196-216 (YETSKINPPAPSPAPASSLAN) is disordered. N218 and N225 each carry an N-linked (GlcNAc...) asparagine glycan. A helical transmembrane segment spans residues 237–257 (IWIVGGLGVVLALLVLCILVC). Topologically, residues 258-651 (ICLRSSSCSS…QVFSGLVQGR (394 aa)) are cytoplasmic. T330 carries the post-translational modification Phosphothreonine. Residues 341 to 628 (FSDSNLLGHG…VVISLSQILL (288 aa)) form the Protein kinase domain. ATP contacts are provided by residues 347–355 (LGHGNYGSV) and K368. Y410 is subject to Phosphotyrosine. The active-site Proton acceptor is the D464. Phosphoserine is present on S468. Phosphothreonine is present on residues T500 and T505. Y513 is subject to Phosphotyrosine.

Belongs to the protein kinase superfamily. Ser/Thr protein kinase family.

Its subcellular location is the cell membrane. Its function is as follows. Putative Lysin motif (LysM) receptor kinase that may recognize microbe-derived N-acetylglucosamine (NAG)-containing ligands. This Arabidopsis thaliana (Mouse-ear cress) protein is LysM domain receptor-like kinase 3 (LYK3).